A 383-amino-acid polypeptide reads, in one-letter code: 8-amino-7-oxononanoate synthase (383 aa).

A substrate-binding site is contributed by Arg23. 110 to 111 contacts pyridoxal 5'-phosphate; sequence GF. His135 is a substrate binding site. Ser181, His209, and Thr235 together coordinate pyridoxal 5'-phosphate. N6-(pyridoxal phosphate)lysine is present on Lys238. Position 351 (Thr351) interacts with substrate.

This sequence belongs to the class-II pyridoxal-phosphate-dependent aminotransferase family. BioF subfamily. In terms of assembly, homodimer. Pyridoxal 5'-phosphate serves as cofactor.

The catalysed reaction is 6-carboxyhexanoyl-[ACP] + L-alanine + H(+) = (8S)-8-amino-7-oxononanoate + holo-[ACP] + CO2. The protein operates within cofactor biosynthesis; biotin biosynthesis. Catalyzes the decarboxylative condensation of pimeloyl-[acyl-carrier protein] and L-alanine to produce 8-amino-7-oxononanoate (AON), [acyl-carrier protein], and carbon dioxide. In Aliivibrio fischeri (strain MJ11) (Vibrio fischeri), this protein is 8-amino-7-oxononanoate synthase.